We begin with the raw amino-acid sequence, 454 residues long: Cell division cycle-associated 7-like protein (454 aa).

The Integrase domain-binding motif 1 (IBM1) motif lies at 9–33; it reads IPKEVADIFNAPSDDEEFVGFRDDV. S21 carries the post-translational modification Phosphoserine. The Integrase domain-binding motif 2 (IBM2) motif lies at 65–91; sequence FTEELRRIFIEDTDSETEDFAGFTQSD. T77 is modified (phosphothreonine). At S79 the chain carries Phosphoserine. A phosphothreonine mark is found at T81 and T88. 2 disordered regions span residues 103–169 and 188–213; these read VESD…LFSS and QVIQ…SSDA. Residues S105, S108, S117, S138, S139, S162, S195, and S197 each carry the phosphoserine modification. Over residues 117–126 the composition is skewed to acidic residues; it reads SEEEEDEEED. Residues 213-235 form an MYC-binding region; sequence ALLKRTMNIKENKAMLAQLLAEL. Residues K222 and K225 each participate in a glycyl lysine isopeptide (Lys-Gly) (interchain with G-Cter in SUMO2) cross-link. The residue at position 261 (S261) is a Phosphoserine.

Interacts with MYC. Interacts (via IBM motifs) with PSIP1 (via IBD domain); phosphorylation increases its affinity for PSIP1. In terms of processing, phosphorylation increases its interaction with PSIP1. As to expression, ubiquitous. Overexpressed in medulloblastoma.

The protein resides in the cytoplasm. It localises to the nucleus. Its function is as follows. Plays a role in transcriptional regulation as a repressor that inhibits monoamine oxidase A (MAOA) activity and gene expression by binding to the promoter. Plays an important oncogenic role in mediating the full transforming effect of MYC in medulloblastoma cells. Involved in apoptotic signaling pathways; May act downstream of P38-kinase and BCL-2, but upstream of CASP3/caspase-3 as well as CCND1/cyclin D1 and E2F1. The protein is Cell division cycle-associated 7-like protein (CDCA7L) of Homo sapiens (Human).